The chain runs to 1070 residues: MSGAGANYWIARLLAVIAGLLGALLAMATPFLPVNQNTAQLNWPQNSTFESVEAPLIGYVATGLNVTVPCAAAAGLTGPQSAGQTVLLSTVPKQAPKAVDRGLLIQRANDDLVLVVRNVPVVSAPMSQVLSPACQRLTFAAYFDKITAEFVGLTYGPNAEHPGVPLRGERSGYDFRPQIVGVFTDLSGPIPTGLNFSATIDTRYSSSPTLLKTIAMILGVVLTIVALVALHLLDTADGTQHRRLLPSRWWSIGCLDGLVITILAWWHFVGANTSDDGYILTMARVSEHAGYMANYYRWFGTPEAPFGWYYDLLALWAHVTTTSAWMRVPTLAMALTCWWLISREVIPRLGHAAKASRAAAWTAAGMFLAVWLPLDNGLRPEPIIALGILLTWCSVERAVATSRLLPVAVACIVGALTLFSGPTGIASIGALLVAVGPLLTILQRRSKQFGAVPLVAPILAASTVTAILIFRDQTFAGESQASLLKRAVGPSLKWFDEHIRYERLFMASPDGSVARRFAVLALLVALSVAVAMSLRKGRIPGLAAGPSRRIIGITVTSFLAMMFTPTKWTHHFGVFAGLAGSLGALAAVAVASAALRSRRNRTVFAAVVLFVVALSFASVNGWWYVSNFGVPWSNSFPKLRWSLTTALLELTVIVLLLAAWFHFVATTNGSAKTRFGVRIDRIVQSPIAIATWSLVIFEVASLTMAMIGQYPAWTVGKSNLQALTGQTCGLAEEVLVEQDPNAGMLLPVSTPVADALGSSLAEAFTANGIPADVSADPVMEPPGDRSFVKENGMTTGGEAGNEGGTNATPGINGSRAQLPYNLDPARTPVLGSWQSGIQVVARLRSGWYRLPARDKAGPLLVVSAAGRFDHHEVKLQWATDSGAASGQPGGAFQFSDVGASPAWRNLRLPLSAIPSMATQIRLVADDEDLAPQHWIALTPPRIPQLRTLQDVVGYQDPVFLDWLVGLAFPCQRPFDHQYGVDETPKWRILPDRFGAEANSPVMDNNGGGPLGVTELLLKATTVASYLKDDWSRDWGALQRLTPYYPNAQPARLSLGTTTRSGLWNPAPLRH.

The next 12 membrane-spanning stretches (helical) occupy residues 10-32 (IARLLAVIAGLLGALLAMATPFL), 210-232 (LLKTIAMILGVVLTIVALVALHL), 247-269 (SRWWSIGCLDGLVITILAWWHFV), 399-421 (VATSRLLPVAVACIVGALTLFSG), 425-442 (IASIGALLVAVGPLLTIL), 449-471 (FGAVPLVAPILAASTVTAILIFR), 512-534 (SVARRFAVLALLVALSVAVAMSL), 547-564 (SRRIIGITVTSFLAMMFT), 574-596 (VFAGLAGSLGALAAVAVASAALR), 603-625 (VFAAVVLFVVALSFASVNGWWYV), 645-664 (TALLELTVIVLLLAAWFHFV), and 685-707 (SPIAIATWSLVIFEVASLTMAMI).

This sequence belongs to the emb family.

It is found in the cell membrane. In terms of biological role, arabinosyl transferase responsible for the polymerization of arabinose into the arabinan of arabinogalactan. The protein is Probable arabinosyltransferase C (embC) of Mycobacterium leprae (strain TN).